The chain runs to 396 residues: Probable sugar efflux transporter (396 aa).

Helical transmembrane passes span 15 to 35, 50 to 70, 81 to 101, 103 to 123, 136 to 156, 169 to 189, 209 to 229, 246 to 266, 275 to 295, 301 to 321, 333 to 353, and 364 to 384; these read VVTL…PVGL, VGIM…PFML, LICL…AWNF, VLVI…SITA, AQAL…GLPI, TFFA…KLLP, PALM…YTAY, FATV…LVFG, LLVS…LPAA, LALL…GMQV, VAMA…ALAG, and TIGY…VLIF.

The protein belongs to the major facilitator superfamily. SotB (TC 2.A.1.2) family.

The protein localises to the cell inner membrane. In terms of biological role, involved in the efflux of sugars. The physiological role may be the reduction of the intracellular concentration of toxic sugars or sugar metabolites. This is Probable sugar efflux transporter from Salmonella arizonae (strain ATCC BAA-731 / CDC346-86 / RSK2980).